An 88-amino-acid polypeptide reads, in one-letter code: Arminin 1c (88 aa).

The signal sequence occupies residues 1 to 18; it reads MKPVFVILFLTCIAFTYA. Residues 19 to 57 constitute a propeptide that is removed on maturation; sequence ESYEDVKEEIKNEVEREIFEDLEEESDVLDSNVREFNDA. Valine amide is present on Val85.

It belongs to the arminin family. In terms of tissue distribution, expressed in entodermal epithelium along the body column.

It is found in the secreted. The protein localises to the target cell membrane. Functionally, antimicrobial peptide with a broad-spectrum antimicrobial activity. Keeps its antibacterial activity under a wide range of salt concentrations that mimic physiological conditions of human blood, which is surprising, since Hydra is an obligate freshwater animal with nearly no salt tolerance. Does not affect red blood cells. The chain is Arminin 1c from Hydra vulgaris (Hydra).